Here is a 131-residue protein sequence, read N- to C-terminus: D-ribose pyranase (131 aa).

Residue H20 is the Proton donor of the active site. Residues D28, H98, and 120-122 (FSN) each bind substrate.

The protein belongs to the RbsD / FucU family. RbsD subfamily. As to quaternary structure, homodecamer.

It localises to the cytoplasm. The catalysed reaction is beta-D-ribopyranose = beta-D-ribofuranose. It participates in carbohydrate metabolism; D-ribose degradation; D-ribose 5-phosphate from beta-D-ribopyranose: step 1/2. Catalyzes the interconversion of beta-pyran and beta-furan forms of D-ribose. The sequence is that of D-ribose pyranase from Lactobacillus acidophilus (strain ATCC 700396 / NCK56 / N2 / NCFM).